A 334-amino-acid polypeptide reads, in one-letter code: Anthranilate phosphoribosyltransferase (334 aa).

Residues glycine 79, 82–83 (GD), serine 87, 89–92 (NIST), 107–115 (KAGNRSISS), and serine 119 contribute to the 5-phospho-alpha-D-ribose 1-diphosphate site. Anthranilate is bound at residue glycine 79. Serine 91 is a Mg(2+) binding site. Asparagine 110 contacts anthranilate. Anthranilate is bound at residue arginine 165. Mg(2+) is bound by residues aspartate 224 and glutamate 225.

The protein belongs to the anthranilate phosphoribosyltransferase family. Homodimer. Mg(2+) serves as cofactor.

The enzyme catalyses N-(5-phospho-beta-D-ribosyl)anthranilate + diphosphate = 5-phospho-alpha-D-ribose 1-diphosphate + anthranilate. Its pathway is amino-acid biosynthesis; L-tryptophan biosynthesis; L-tryptophan from chorismate: step 2/5. Catalyzes the transfer of the phosphoribosyl group of 5-phosphorylribose-1-pyrophosphate (PRPP) to anthranilate to yield N-(5'-phosphoribosyl)-anthranilate (PRA). The polypeptide is Anthranilate phosphoribosyltransferase (Streptococcus thermophilus (strain ATCC BAA-250 / LMG 18311)).